The following is a 106-amino-acid chain: Large ribosomal subunit protein bL21 (106 aa).

This sequence belongs to the bacterial ribosomal protein bL21 family. As to quaternary structure, part of the 50S ribosomal subunit. Contacts protein L20.

In terms of biological role, this protein binds to 23S rRNA in the presence of protein L20. The sequence is that of Large ribosomal subunit protein bL21 from Xanthomonas euvesicatoria pv. vesicatoria (strain 85-10) (Xanthomonas campestris pv. vesicatoria).